A 170-amino-acid polypeptide reads, in one-letter code: Lipoprotein signal peptidase (170 aa).

5 helical membrane-spanning segments follow: residues 13 to 33 (IFIS…VTYV), 72 to 92 (LFFL…SLKE), 96 to 113 (VSRF…GNII), 116 to 136 (LFRP…IFGL), and 142 to 162 (FNFA…YDLF). Catalysis depends on residues Asp124 and Asp146.

Belongs to the peptidase A8 family.

It localises to the cell inner membrane. It catalyses the reaction Release of signal peptides from bacterial membrane prolipoproteins. Hydrolyzes -Xaa-Yaa-Zaa-|-(S,diacylglyceryl)Cys-, in which Xaa is hydrophobic (preferably Leu), and Yaa (Ala or Ser) and Zaa (Gly or Ala) have small, neutral side chains.. It functions in the pathway protein modification; lipoprotein biosynthesis (signal peptide cleavage). Its function is as follows. This protein specifically catalyzes the removal of signal peptides from prolipoproteins. This Borrelia duttonii (strain Ly) protein is Lipoprotein signal peptidase.